Consider the following 136-residue polypeptide: Salivary protein 15 Iric-2 (136 aa).

The N-terminal stretch at 1-22 (MESFVAMKVVCIVLLFVIAAEA) is a signal peptide. N-linked (GlcNAc...) asparagine glycosylation occurs at N105. Residues 117-136 (GPKNQTCENKDQCVPHIPGC) are CD4-binding.

Belongs to the salp15 family. Interacts with host CD4. Interacts with host DC-SIGN (CD209). Interacts with Borrelia outer surface protein C (OspC). As to expression, expressed in salivary glands. Detected in fed adult female.

It is found in the secreted. In terms of biological role, salivary tick protein that downregulates host immune system by binding to both dendritic cells, and CD4(+) T cells. Specifically binds to the CD4 coreceptor on T cells. This interaction prevents the activation of the Src kinase, Lck, and its downstream substrate Zap-70, and results in deficient activation of PLCgamma1, the repression of calcium fluxes triggered by T-cell antigen receptor (TCR) ligation, and a subsequent reduction in interleukin-2 production. This salivary protein also binds to DC-SIGN (CD209) on dendritic cells (DC) and activates the Raf-1 kinase/MEK signaling pathway that results in down-regulating expression of pro-inflammatory cytokines. Furthermore, it inhibits T cell proliferation induced by DCs. In addition, it inhibits in vitro keratinocyte inflammation induced by Borrelia burgdorferi or by the major outer surface protein (OspC) of Borrelia. In addition, it downregulates chemokines and monocyte chemoattractant protein 1, as well as several antimicrobial peptides such as defensins, cathelicidin, psoriasin, and RNase 7. Apart from its immunomodulatory activities, it is also associated with protection of Borrelia spirochetes from antibody-mediated killing through its binding to OspC. In vivo, tests on different immune disease animal models show promising therapeutic results, e.g., in inhibiting HIV infection, experimental autoimmune encephalomyelitis, transplantation rejection, and asthma. The polypeptide is Salivary protein 15 Iric-2 (Ixodes ricinus (Common tick)).